The following is a 98-amino-acid chain: NADH-ubiquinone oxidoreductase chain 4L (98 aa).

2 helical membrane passes run 1–21 and 48–68; these read MTLI…GLAL and PLHL…PFAA.

This sequence belongs to the complex I subunit 4L family. Core subunit of respiratory chain NADH dehydrogenase (Complex I) which is composed of 45 different subunits.

The protein localises to the mitochondrion inner membrane. It carries out the reaction a ubiquinone + NADH + 5 H(+)(in) = a ubiquinol + NAD(+) + 4 H(+)(out). Its function is as follows. Core subunit of the mitochondrial membrane respiratory chain NADH dehydrogenase (Complex I) which catalyzes electron transfer from NADH through the respiratory chain, using ubiquinone as an electron acceptor. Part of the enzyme membrane arm which is embedded in the lipid bilayer and involved in proton translocation. This Xenopus laevis (African clawed frog) protein is NADH-ubiquinone oxidoreductase chain 4L (mt-nd4l).